Consider the following 897-residue polypeptide: Translation initiation factor IF-2 (897 aa).

The segment at 52–310 (EHGSAPDKLT…LLQQGFQKPA (259 aa)) is disordered. Positions 68–82 (STLNVPGTGGKSKSV) are enriched in polar residues. Composition is skewed to basic and acidic residues over residues 85-159 (EVRK…KDKV) and 166-217 (EMTK…ENEK). Basic residues predominate over residues 256-272 (GRTRTASKTARPQKKGN). The span at 273-286 (KHAESKADREEARA) shows a compositional bias: basic and acidic residues. Residues 396–565 (PRAPVVTIMG…LLQAEVLELK (170 aa)) form the tr-type G domain. The segment at 405 to 412 (GHVDHGKT) is G1. 405–412 (GHVDHGKT) contributes to the GTP binding site. The tract at residues 430-434 (GITQH) is G2. Residues 451–454 (DTPG) are G3. Residues 451–455 (DTPGH) and 505–508 (NKID) each bind GTP. The segment at 505-508 (NKID) is G4. Positions 541–543 (SAK) are G5.

The protein belongs to the TRAFAC class translation factor GTPase superfamily. Classic translation factor GTPase family. IF-2 subfamily.

It is found in the cytoplasm. In terms of biological role, one of the essential components for the initiation of protein synthesis. Protects formylmethionyl-tRNA from spontaneous hydrolysis and promotes its binding to the 30S ribosomal subunits. Also involved in the hydrolysis of GTP during the formation of the 70S ribosomal complex. In Enterobacter cloacae, this protein is Translation initiation factor IF-2 (infB).